The chain runs to 202 residues: Cutinase (202 aa).

An N-terminal signal peptide occupies residues 1–20; it reads MKTSAQQLLSALLLPLSVLA. Cys31 and Cys106 are joined by a disulfide. Ser117 functions as the Nucleophile in the catalytic mechanism. A disulfide bridge connects residues Cys165 and Cys172. Asp169 is an active-site residue. Catalysis depends on His182, which acts as the Proton donor/acceptor.

The protein belongs to the cutinase family. Post-translationally, the 2 disulfide bonds play a critical role in holding the catalytic residues in juxta-position; reduction of the disulfide bridges results in the complete inactivation of the enzyme.

Its subcellular location is the secreted. It catalyses the reaction cutin + H2O = cutin monomers.. Catalyzes the hydrolysis of complex carboxylic polyesters found in the cell wall of plants. Degrades cutin, a macromolecule that forms the structure of the plant cuticle. Allows pathogenic fungi to penetrate through the cuticular barrier into the host plant during the initial stage of fungal infection. The sequence is that of Cutinase from Botryotinia fuckeliana (Noble rot fungus).